The sequence spans 230 residues: 7-cyano-7-deazaguanine synthase (230 aa).

Residue 14–24 coordinates ATP; it reads LSGGLDSTTTL. Zn(2+)-binding residues include Cys194, Cys204, Cys207, and Cys210.

It belongs to the QueC family. The cofactor is Zn(2+).

It catalyses the reaction 7-carboxy-7-deazaguanine + NH4(+) + ATP = 7-cyano-7-deazaguanine + ADP + phosphate + H2O + H(+). Its pathway is purine metabolism; 7-cyano-7-deazaguanine biosynthesis. Catalyzes the ATP-dependent conversion of 7-carboxy-7-deazaguanine (CDG) to 7-cyano-7-deazaguanine (preQ(0)). This is 7-cyano-7-deazaguanine synthase from Vesicomyosocius okutanii subsp. Calyptogena okutanii (strain HA).